A 258-amino-acid chain; its full sequence is Exosome complex component Rrp41 (258 aa).

Belongs to the RNase PH family. Rrp41 subfamily. Component of the archaeal exosome complex. Forms a hexameric ring-like arrangement composed of 3 Rrp41-Rrp42 heterodimers. The hexameric ring associates with a trimer of Rrp4 and/or Csl4 subunits.

The protein resides in the cytoplasm. In terms of biological role, catalytic component of the exosome, which is a complex involved in RNA degradation. Has 3'-&gt;5' exoribonuclease activity. Can also synthesize heteromeric RNA-tails. This Archaeoglobus fulgidus (strain ATCC 49558 / DSM 4304 / JCM 9628 / NBRC 100126 / VC-16) protein is Exosome complex component Rrp41.